The primary structure comprises 255 residues: Cell division protein DivIB (255 aa).

The Cytoplasmic segment spans residues 1 to 30 (MKNSKVIKLQDRVPKLKNQKKRNKPPVNHR). The chain crosses the membrane as a helical span at residues 31 to 51 (LILYISILFLLVLFLIYFRSP). Over 52–255 (LSNIKKISVF…FKYLDDEKKK (204 aa)) the chain is Extracellular. Residues 53–121 (SNIKKISVFG…NKIDIHIEEY (69 aa)) enclose the POTRA domain.

This sequence belongs to the FtsQ/DivIB family. DivIB subfamily.

The protein resides in the cell membrane. Cell division protein that may be involved in stabilizing or promoting the assembly of the division complex. The protein is Cell division protein DivIB of Bacillus cytotoxicus (strain DSM 22905 / CIP 110041 / 391-98 / NVH 391-98).